Consider the following 740-residue polypeptide: ABC transporter G family member 1 (740 aa).

The 253-residue stretch at 82–334 (LDFRNLFPRR…FTEFGSPIPE (253 aa)) folds into the ABC transporter domain. Residue 127–134 (GASGSGKS) coordinates ATP. The 211-residue stretch at 434–644 (IEIKTLSKRS…PYEAVLQNEF (211 aa)) folds into the ABC transmembrane type-2 domain. 6 consecutive transmembrane segments (helical) span residues 453–473 (LFGI…TVFW), 488–508 (FFAF…PVFL), 529–549 (VLSH…AFAA), 563–585 (GLLF…VTFL), 594–614 (LGYT…GFFI), and 713–733 (LFIT…TLLL).

This sequence belongs to the ABC transporter superfamily. ABCG family. Eye pigment precursor importer (TC 3.A.1.204) subfamily.

It localises to the membrane. The chain is ABC transporter G family member 1 (ABCG1) from Arabidopsis thaliana (Mouse-ear cress).